Here is a 357-residue protein sequence, read N- to C-terminus: MKRYKVVLLSGDGIGPEISEISITILKKLSKKYGFNLDIKEEYFGGIAYEKHNDPAPKETLDQCKASDAVLLACVGDVKYDTLPRELRPESGLLKLREALNLFANIRPVKIRKSLLDSSSFKKEVIENVDLIVVRELIGGIYFGQPRGEITQTKIKKAFNTMVYDSNEIERITEVAIKIANQRSKKICSVDKSNVLEVSQLWRDTVSLVASKENDLALSNMYVDNAAMQLVKDPGQFDVILTSNLFGDILSDLAAMITGSIGMLPSASLSNSGPGVFEPVHGSAPDIAGKNIANPIAMALSTSMMLKIGLNEIEAADDIEIAIDNVLSKGYRTSDLDNGNCQVLSCSEIGEKIIQEI.

Residues Arg97, Arg107, Arg135, and Asp224 each coordinate substrate. Positions 224, 248, and 252 each coordinate Mg(2+). 282-294 (GSAPDIAGKNIAN) is an NAD(+) binding site.

It belongs to the isocitrate and isopropylmalate dehydrogenases family. LeuB type 1 subfamily. As to quaternary structure, homodimer. It depends on Mg(2+) as a cofactor. Mn(2+) is required as a cofactor.

It is found in the cytoplasm. The catalysed reaction is (2R,3S)-3-isopropylmalate + NAD(+) = 4-methyl-2-oxopentanoate + CO2 + NADH. Its pathway is amino-acid biosynthesis; L-leucine biosynthesis; L-leucine from 3-methyl-2-oxobutanoate: step 3/4. Functionally, catalyzes the oxidation of 3-carboxy-2-hydroxy-4-methylpentanoate (3-isopropylmalate) to 3-carboxy-4-methyl-2-oxopentanoate. The product decarboxylates to 4-methyl-2 oxopentanoate. The sequence is that of 3-isopropylmalate dehydrogenase from Prochlorococcus marinus subsp. pastoris (strain CCMP1986 / NIES-2087 / MED4).